Consider the following 261-residue polypeptide: GTP cyclohydrolase FolE2 (261 aa).

The protein belongs to the GTP cyclohydrolase IV family.

The catalysed reaction is GTP + H2O = 7,8-dihydroneopterin 3'-triphosphate + formate + H(+). It participates in cofactor biosynthesis; 7,8-dihydroneopterin triphosphate biosynthesis; 7,8-dihydroneopterin triphosphate from GTP: step 1/1. In terms of biological role, converts GTP to 7,8-dihydroneopterin triphosphate. This is GTP cyclohydrolase FolE2 from Herminiimonas arsenicoxydans.